The primary structure comprises 357 residues: 3-isopropylmalate dehydrogenase (357 aa).

Residue 76-89 (GPQWDTIDPSLRPE) participates in NAD(+) binding. 4 residues coordinate substrate: Arg-96, Arg-106, Arg-134, and Asp-224. Mg(2+)-binding residues include Asp-224, Asp-248, and Asp-252. 282–294 (GSAPDIAGKGIAN) is a binding site for NAD(+).

This sequence belongs to the isocitrate and isopropylmalate dehydrogenases family. LeuB type 1 subfamily. In terms of assembly, homodimer. It depends on Mg(2+) as a cofactor. The cofactor is Mn(2+).

The protein localises to the cytoplasm. It carries out the reaction (2R,3S)-3-isopropylmalate + NAD(+) = 4-methyl-2-oxopentanoate + CO2 + NADH. Its pathway is amino-acid biosynthesis; L-leucine biosynthesis; L-leucine from 3-methyl-2-oxobutanoate: step 3/4. Functionally, catalyzes the oxidation of 3-carboxy-2-hydroxy-4-methylpentanoate (3-isopropylmalate) to 3-carboxy-4-methyl-2-oxopentanoate. The product decarboxylates to 4-methyl-2 oxopentanoate. This chain is 3-isopropylmalate dehydrogenase, found in Xanthomonas oryzae pv. oryzae (strain MAFF 311018).